The sequence spans 82 residues: Small ribosomal subunit protein bS16 (82 aa).

This sequence belongs to the bacterial ribosomal protein bS16 family.

In Bdellovibrio bacteriovorus (strain ATCC 15356 / DSM 50701 / NCIMB 9529 / HD100), this protein is Small ribosomal subunit protein bS16.